A 123-amino-acid chain; its full sequence is Prostate stem cell antigen (123 aa).

Positions 1–20 (MKTVFFLLLATYLALHPGAA) are cleaved as a signal peptide. One can recognise a UPAR/Ly6 domain in the interval 21–95 (LQCYSCTAQM…CCYSDLCNVN (75 aa)). 5 cysteine pairs are disulfide-bonded: Cys-23–Cys-48, Cys-26–Cys-35, Cys-41–Cys-66, Cys-70–Cys-86, and Cys-87–Cys-92. An N-linked (GlcNAc...) asparagine glycan is attached at Asn-40. The GPI-anchor amidated asparagine moiety is linked to residue Asn-95. Positions 96-123 (GAHTLKPPTTLGLLTVLCSLLLWGSSRL) are cleaved as a propeptide — removed in mature form.

In terms of assembly, interacts with CHRNA4. As to expression, predominantly expressed in prostate. Also found in spleen, liver, lung, prostate, kidney and testis. Expressed in brain cortex; expression is increased in transgenic mouse model of Alzheimer disease (at protein level).

The protein resides in the cell membrane. In terms of biological role, may be involved in the regulation of cell proliferation. Its function is as follows. May act as a modulator of nicotinic acetylcholine receptors (nAChRs) activity. In vitro inhibits nicotine-induced signaling probably implicating alpha-3:beta-2- or alpha-7-containing nAChRs. This chain is Prostate stem cell antigen (Psca), found in Mus musculus (Mouse).